A 195-amino-acid polypeptide reads, in one-letter code: Probable molybdenum cofactor guanylyltransferase (195 aa).

GTP-binding positions include 8–10 (LSG), lysine 20, aspartate 65, and aspartate 96. Aspartate 96 is a Mg(2+) binding site.

It belongs to the MobA family. Requires Mg(2+) as cofactor.

It localises to the cytoplasm. It catalyses the reaction Mo-molybdopterin + GTP + H(+) = Mo-molybdopterin guanine dinucleotide + diphosphate. Its function is as follows. Transfers a GMP moiety from GTP to Mo-molybdopterin (Mo-MPT) cofactor (Moco or molybdenum cofactor) to form Mo-molybdopterin guanine dinucleotide (Mo-MGD) cofactor. This is Probable molybdenum cofactor guanylyltransferase from Bacillus licheniformis (strain ATCC 14580 / DSM 13 / JCM 2505 / CCUG 7422 / NBRC 12200 / NCIMB 9375 / NCTC 10341 / NRRL NRS-1264 / Gibson 46).